A 681-amino-acid chain; its full sequence is Methionine--tRNA ligase (681 aa).

The 'HIGH' region signature appears at 14–24 (PYANGSIHLGH). Zn(2+) contacts are provided by Cys-145, Cys-148, Cys-158, and Cys-161. The 'KMSKS' region signature appears at 331 to 335 (KMSKS). Lys-334 is a binding site for ATP. A tRNA-binding domain is found at 579 to 681 (TFAAVDLRVA…SGAKPGQRIK (103 aa)).

This sequence belongs to the class-I aminoacyl-tRNA synthetase family. MetG type 1 subfamily. Homodimer. Zn(2+) is required as a cofactor.

It localises to the cytoplasm. It catalyses the reaction tRNA(Met) + L-methionine + ATP = L-methionyl-tRNA(Met) + AMP + diphosphate. Functionally, is required not only for elongation of protein synthesis but also for the initiation of all mRNA translation through initiator tRNA(fMet) aminoacylation. This chain is Methionine--tRNA ligase, found in Pseudomonas putida (strain W619).